Consider the following 485-residue polypeptide: Cobyric acid synthase (485 aa).

One can recognise a GATase cobBQ-type domain in the interval 248-435 (RLKVAVAVPP…LHGLFESPAA (188 aa)). Cysteine 329 functions as the Nucleophile in the catalytic mechanism. Histidine 427 is a catalytic residue.

This sequence belongs to the CobB/CobQ family. CobQ subfamily.

The protein operates within cofactor biosynthesis; adenosylcobalamin biosynthesis. Functionally, catalyzes amidations at positions B, D, E, and G on adenosylcobyrinic A,C-diamide. NH(2) groups are provided by glutamine, and one molecule of ATP is hydrogenolyzed for each amidation. The polypeptide is Cobyric acid synthase (Azotobacter vinelandii (strain DJ / ATCC BAA-1303)).